We begin with the raw amino-acid sequence, 780 residues long: WD repeat-containing protein 27 (780 aa).

WD repeat units follow at residues threonine 3–serine 56, histidine 61–valine 100, leucine 111–valine 150, serine 154–phenylalanine 193, tyrosine 200–leucine 236, phenylalanine 291–phenylalanine 335, histidine 342–isoleucine 385, asparagine 500–alanine 540, glycine 544–valine 582, methionine 588–proline 639, lysine 644–leucine 685, alanine 691–leucine 738, and alanine 752–proline 779.

This is WD repeat-containing protein 27 (Wdr27) from Mus musculus (Mouse).